We begin with the raw amino-acid sequence, 685 residues long: MVLLPGSMLLTSNLHHLRHQMSPGSWKRLIILLSCVFGGGGTSLQNKNPHQPMTLTWQVLSQTGDVVWDTKAVQPPWTWWPTLKPDVCALAASLESWDIPGTDVSSSKRVRPPDSDYTAAYKQITWGAIGCSYPRARTRMASSTFYVCPRDGRTLSEARRCGGLESLYCKEWDCETTGTGYWLSKSSKDLITVKWDQNSEWTQKFQQCHQTGWCNPLKIDFTDKGKLSKDWITGKTWGLRFYVSGHPGVQFTIRLKITNMPAVAVGPDLVLVEQGPPRTSLALPPPLPPREAPPPSLPDSNSTALATSAQTPTVRKTIVTLNTPPPTTGDRLFDLVQGAFLTLNATNPGATESCWLCLAMGPPYYEAIASSGEVAYSTDLDRCRWGTQGKLTLTEVSGHGLCIGKVPFTHQHLCNQTLSINSSGDHQYLLPSNHSWWACSTGLTPCLSTSVFNQTRDFCIQVQLIPRIYYYPEEVLLQAYDNSHPRTKREAVSLTLAVLLGLGITAGIGTGSTALIKGPIDLQQGLTSLQIAIDADLRALQDSVSKLEDSLTSLSEVVLQNRRGLDLLFLKEGGLCAALKEECCFYIDHSGAVRDSMKKLKEKLDKRQLERQKSQNWYEGWFNNSPWFTTLLSTIAGPLLLLLLLLILGPCIINKLVQFINDRISAVKILVLRQKYQALENEGNL.

Residues 1 to 41 (MVLLPGSMLLTSNLHHLRHQMSPGSWKRLIILLSCVFGGGG) form the signal peptide. The Extracellular segment spans residues 42 to 632 (TSLQNKNPHQ…NNSPWFTTLL (591 aa)). Intrachain disulfides connect Cys148–Cys169 and Cys161–Cys174. Positions 276–309 (PPRTSLALPPPLPPREAPPPSLPDSNSTALATSA) are disordered. Residues 283–297 (LPPPLPPREAPPPSL) are compositionally biased toward pro residues. The segment covering 299-309 (DSNSTALATSA) has biased composition (polar residues). 2 N-linked (GlcNAc...) asparagine; by host glycosylation sites follow: Asn301 and Asn344. Cystine bridges form between Cys354-Cys357, Cys354-Cys584, and Cys576-Cys583. The CXXC motif lies at 354-357 (CWLC). Residues Asn415, Asn421, Asn433, and Asn453 are each glycosylated (N-linked (GlcNAc...) asparagine; by host). The tract at residues 492–512 (VSLTLAVLLGLGITAGIGTGS) is fusion peptide. Coiled-coil stretches lie at residues 520–570 (IDLQ…LLFL) and 580–616 (KEEC…KSQN). The immunosuppression stretch occupies residues 559 to 575 (LQNRRGLDLLFLKEGGL). The CX6CC motif lies at 576–584 (CAALKEECC). A helical membrane pass occupies residues 633–653 (STIAGPLLLLLLLLILGPCII). Cys651 is lipidated: S-palmitoyl cysteine; by host. Topologically, residues 654–685 (NKLVQFINDRISAVKILVLRQKYQALENEGNL) are cytoplasmic. The short motif at 676–679 (YQAL) is the YXXL motif; contains endocytosis signal element.

The mature envelope protein (Env) consists of a trimer of SU-TM heterodimers attached by a labile interchain disulfide bond. Specific enzymatic cleavages in vivo yield mature proteins. Envelope glycoproteins are synthesized as an inactive precursor that is N-glycosylated and processed likely by host cell furin or by a furin-like protease in the Golgi to yield the mature SU and TM proteins. The cleavage site between SU and TM requires the minimal sequence [KR]-X-[KR]-R. The R-peptide is released from the C-terminus of the cytoplasmic tail of the TM protein upon particle formation as a result of proteolytic cleavage by the viral protease. Cleavage of this peptide is required for TM to become fusogenic. Post-translationally, the CXXC motif is highly conserved across a broad range of retroviral envelope proteins. It is thought to participate in the formation of a labile disulfide bond possibly with the CX6CC motif present in the transmembrane protein. Isomerization of the intersubunit disulfide bond to an SU intrachain disulfide bond is thought to occur upon receptor recognition in order to allow membrane fusion. In terms of processing, the transmembrane protein is palmitoylated. The R-peptide is palmitoylated.

It localises to the virion membrane. The protein resides in the host cell membrane. Its function is as follows. The surface protein (SU) attaches the virus to the host cell by binding to its receptor. This interaction triggers the refolding of the transmembrane protein (TM) and is thought to activate its fusogenic potential by unmasking its fusion peptide. Fusion occurs at the host cell plasma membrane. The transmembrane protein (TM) acts as a class I viral fusion protein. Under the current model, the protein has at least 3 conformational states: pre-fusion native state, pre-hairpin intermediate state, and post-fusion hairpin state. During viral and target cell membrane fusion, the coiled coil regions (heptad repeats) assume a trimer-of-hairpins structure, positioning the fusion peptide in close proximity to the C-terminal region of the ectodomain. The formation of this structure appears to drive apposition and subsequent fusion of viral and target cell membranes. Membranes fusion leads to delivery of the nucleocapsid into the cytoplasm. The chain is Envelope glycoprotein (env) from Gibbon ape leukemia virus (GALV).